A 590-amino-acid polypeptide reads, in one-letter code: UvrABC system protein C (590 aa).

Residues 15-92 (DLPGCYMMKD…IQKHKPYYNI (78 aa)) enclose the GIY-YIG domain. The 36-residue stretch at 197–232 (SKIKKELEQKMETASENLEFERAAEIRDQIHYVEMT) folds into the UVR domain.

The protein belongs to the UvrC family. Interacts with UvrB in an incision complex.

The protein localises to the cytoplasm. The UvrABC repair system catalyzes the recognition and processing of DNA lesions. UvrC both incises the 5' and 3' sides of the lesion. The N-terminal half is responsible for the 3' incision and the C-terminal half is responsible for the 5' incision. The polypeptide is UvrABC system protein C (Ligilactobacillus salivarius (strain UCC118) (Lactobacillus salivarius)).